We begin with the raw amino-acid sequence, 444 residues long: Methylenetetrahydrofolate--tRNA-(uracil-5-)-methyltransferase TrmFO (444 aa).

Residue 10–15 (GAGLAG) coordinates FAD.

Belongs to the MnmG family. TrmFO subfamily. The cofactor is FAD.

The protein resides in the cytoplasm. The enzyme catalyses uridine(54) in tRNA + (6R)-5,10-methylene-5,6,7,8-tetrahydrofolate + NADH + H(+) = 5-methyluridine(54) in tRNA + (6S)-5,6,7,8-tetrahydrofolate + NAD(+). It carries out the reaction uridine(54) in tRNA + (6R)-5,10-methylene-5,6,7,8-tetrahydrofolate + NADPH + H(+) = 5-methyluridine(54) in tRNA + (6S)-5,6,7,8-tetrahydrofolate + NADP(+). Functionally, catalyzes the folate-dependent formation of 5-methyl-uridine at position 54 (M-5-U54) in all tRNAs. In Streptococcus suis (strain 98HAH33), this protein is Methylenetetrahydrofolate--tRNA-(uracil-5-)-methyltransferase TrmFO.